Consider the following 199-residue polypeptide: MARMRQPRFKTCRRLGINVCGHPKAMKRADNGQVRDKRKLSSYGIQLLEKQRLRAYYEVMEKQFKIYVKAAIKDSETTGNSLIKKLECRLDNLVYRTGFGSSIRQARQMVVHGHILVNGKKVDRPSFAVSVGDDISLREKSRKNKIFIDNFLRNVDFSYPYIAKNEAGFSGQLIRMPERHEAPIEVNDHLVVEFYSKTI.

One can recognise an S4 RNA-binding domain in the interval 88–151 (CRLDNLVYRT…RKNKIFIDNF (64 aa)).

Belongs to the universal ribosomal protein uS4 family. As to quaternary structure, part of the 30S ribosomal subunit. Contacts protein S5. The interaction surface between S4 and S5 is involved in control of translational fidelity.

In terms of biological role, one of the primary rRNA binding proteins, it binds directly to 16S rRNA where it nucleates assembly of the body of the 30S subunit. With S5 and S12 plays an important role in translational accuracy. The sequence is that of Small ribosomal subunit protein uS4B from Alkaliphilus metalliredigens (strain QYMF).